Here is a 514-residue protein sequence, read N- to C-terminus: MTIESGRIRIFDTTLRDGEQSPGATMNLQEKIRLARQLETLGVDIMEAGFPASSQGDFEAVQAIARAVKGVEVAGLCRAMPADIDRAWEAVKVAENPRIHTFLATSPVHMQYKLRKEPDQVVEMAVAAVRHAAKYTSNVEFSAEDASRSNPDFLVRVFEAVINAGATTINVPDTVGYAQPEEFGRLIRYVIENTPNSHKAVFSVHCHNDLGMGVANTLAALKAGARQAEVTISGIGERAGNASLEEIVMALHTRRDFYQLDCGVVTEQLFPTCRLLSMIIGQPIPPNKAIVGANAFAHESGIHQDGMLKNRETYEIMTPESIGKTKTDLVIGKHSGRNAVKNKLDELGYRLEEAQLVTVFEAVKKLADKKKQIYDEDIEALVLEEVYRLPDLYRLVNLSVQCSDTGMPPTAAVVMDVMGEVKRAAGFGVGPIDAVFNVIGEIVGRAPVLERYSVTAITGGTDAQGEVTVRLRQNGSSAVGRGSDPDIILASARAYVNALNRLAKKEEEQEKEGI.

The Pyruvate carboxyltransferase domain occupies 8-270 (IRIFDTTLRD…DCGVVTEQLF (263 aa)). Mn(2+)-binding residues include aspartate 17, histidine 205, histidine 207, and asparagine 241. The segment at 394 to 514 (RLVNLSVQCS…KEEEQEKEGI (121 aa)) is regulatory domain.

It belongs to the alpha-IPM synthase/homocitrate synthase family. LeuA type 1 subfamily. As to quaternary structure, homodimer. Requires Mn(2+) as cofactor.

The protein localises to the cytoplasm. The catalysed reaction is 3-methyl-2-oxobutanoate + acetyl-CoA + H2O = (2S)-2-isopropylmalate + CoA + H(+). Its pathway is amino-acid biosynthesis; L-leucine biosynthesis; L-leucine from 3-methyl-2-oxobutanoate: step 1/4. In terms of biological role, catalyzes the condensation of the acetyl group of acetyl-CoA with 3-methyl-2-oxobutanoate (2-ketoisovalerate) to form 3-carboxy-3-hydroxy-4-methylpentanoate (2-isopropylmalate). The polypeptide is 2-isopropylmalate synthase (Nitratidesulfovibrio vulgaris (strain DSM 19637 / Miyazaki F) (Desulfovibrio vulgaris)).